The sequence spans 1210 residues: Homeodomain-interacting protein kinase 1 (1210 aa).

Residue K25 forms a Glycyl lysine isopeptide (Lys-Gly) (interchain with G-Cter in SUMO); alternate linkage. K25 is covalently cross-linked (Glycyl lysine isopeptide (Lys-Gly) (interchain with G-Cter in SUMO2); alternate). Residues K120 and K124 each participate in a glycyl lysine isopeptide (Lys-Gly) (interchain with G-Cter in SUMO2) cross-link. Residues 190-518 form the Protein kinase domain; it reads YEVLEFLGRG…PLKTLNHQFV (329 aa). ATP contacts are provided by residues 196 to 204 and K219; that span reads LGRGTFGQV. D315 (proton acceptor) is an active-site residue. The disordered stretch occupies residues 835–856; sequence QQQSSSLPSKKNKQSAPVSSKS. The Nuclear localization signal 1 (NLS1) signature appears at 844–847; the sequence is KKNK. Residue S872 is modified to Phosphoserine. The interval 885–1093 is interaction with TP53; it reads PVQDQHQPII…FQHGSPLHST (209 aa). Residues 891-998 form a required for localization to nuclear speckles region; sequence QPIIIPDTPS…PLKTQLGDCT (108 aa). Positions 902–926 are SUMO interaction motifs (SIM); required for nuclear localization and kinase activity; it reads PVSVITIRSDTDEEEDNKYKPNSSS. A disordered region spans residues 938-981; the sequence is TVNDSPDSDSSLSSPHPTDTLSALRGNSGTLLEGPGRPAADGIG. The span at 941–959 shows a compositional bias: low complexity; that stretch reads DSPDSDSSLSSPHPTDTLS. K991 is covalently cross-linked (Glycyl lysine isopeptide (Lys-Gly) (interchain with G-Cter in SUMO2)). Disordered regions lie at residues 1046–1069 and 1084–1104; these read LSQN…APRR and FQHG…APAH. 2 stretches are compositionally biased toward low complexity: residues 1047 to 1063 and 1095 to 1104; these read SQNQ…ERSS and HPHLAPAPAH. Position 1200 is a phosphoserine (S1200). K1203 participates in a covalent cross-link: Glycyl lysine isopeptide (Lys-Gly) (interchain with G-Cter in SUMO).

It belongs to the protein kinase superfamily. CMGC Ser/Thr protein kinase family. HIPK subfamily. As to quaternary structure, interacts with Nkx1-2, Nkx2-5, MYB, PARK7, DAXX and p53/TP53. Part of a cytoplasmic complex made of HIPK1, DAB2IP and MAP3K5 in response to TNF. This complex formation promotes MAP3K5-JNK activation and subsequent apoptosis. Post-translationally, phosphorylated and activated by JNK1. Autophosphorylated. In terms of processing, sumoylated. When conjugated it is directed to nuclear speckles. SENP1-mediated desumoylation is mediated by TNF in response to stress stimuli, triggering transient translocation from nucleus to cytoplasm. In terms of tissue distribution, ubiquitously expressed, with high levels in reproductive tissues. Expressed in the epithelial layer of mammary gland, uterus and epididymis, in the corpus luteum, and in post-meiotic round spermatids.

The protein resides in the nucleus. It localises to the cytoplasm. Its subcellular location is the nucleus speckle. It carries out the reaction L-seryl-[protein] + ATP = O-phospho-L-seryl-[protein] + ADP + H(+). The enzyme catalyses L-threonyl-[protein] + ATP = O-phospho-L-threonyl-[protein] + ADP + H(+). Serine/threonine-protein kinase involved in transcription regulation and TNF-mediated cellular apoptosis. Plays a role as a corepressor for homeodomain transcription factors. Phosphorylates DAXX and MYB. Phosphorylates DAXX in response to stress, and mediates its translocation from the nucleus to the cytoplasm. Inactivates MYB transcription factor activity by phosphorylation. Prevents MAP3K5-JNK activation in the absence of TNF. TNF triggers its translocation to the cytoplasm in response to stress stimuli, thus activating nuclear MAP3K5-JNK by derepression and promoting apoptosis. May be involved in anti-oxidative stress responses. Involved in the regulation of eye size, lens formation and retinal lamination during late embryogenesis. Promotes angiogenesis and to be involved in erythroid differentiation. May be involved in malignant squamous cell tumor formation. Phosphorylates PAGE4 at 'Thr-51' which is critical for the ability of PAGE4 to potentiate the transcriptional activator activity of JUN. The protein is Homeodomain-interacting protein kinase 1 (Hipk1) of Mus musculus (Mouse).